Reading from the N-terminus, the 454-residue chain is Trigger factor (454 aa).

The 93-residue stretch at 169-261 (GDVAIADYEG…LKELKSRELP (93 aa)) folds into the PPIase FKBP-type domain.

Belongs to the FKBP-type PPIase family. Tig subfamily.

Its subcellular location is the cytoplasm. It carries out the reaction [protein]-peptidylproline (omega=180) = [protein]-peptidylproline (omega=0). Its function is as follows. Involved in protein export. Acts as a chaperone by maintaining the newly synthesized protein in an open conformation. Functions as a peptidyl-prolyl cis-trans isomerase. The protein is Trigger factor of Picosynechococcus sp. (strain ATCC 27264 / PCC 7002 / PR-6) (Agmenellum quadruplicatum).